Reading from the N-terminus, the 658-residue chain is Carnitine O-palmitoyltransferase 2, mitochondrial (658 aa).

A mitochondrion-targeting transit peptide spans 1–25; that stretch reads MVPRLLLRAWPRGPAVGPGAPSRPL. Topologically, residues 26–178 are mitochondrial matrix; sequence SAGSGPGQYL…GLLEPEVFHL (153 aa). The residue at position 69 (Lys69) is an N6-succinyllysine. Position 79 is an N6-acetyllysine (Lys79). At Lys85 the chain carries N6-succinyllysine. Residues 179-208 constitute an intramembrane region (note=Mitochondrial inner membrane); it reads NPAKSDTDTFKRLIRFVPSSLSWYGAYLVN. The Mitochondrial matrix segment spans residues 209–658; it reads AYPLDMSQYF…DALEGKSIKS (450 aa). N6-acetyllysine; alternate is present on Lys239. Lys239 carries the N6-succinyllysine; alternate modification. The residue at position 305 (Lys305) is an N6-acetyllysine. The active-site Proton acceptor is His372. N6-acetyllysine; alternate is present on Lys418. Position 418 is an N6-succinyllysine; alternate (Lys418). N6-succinyllysine is present on residues Lys424 and Lys439. 452 to 464 provides a ligand contact to CoA; the sequence is GKEFLKKQKLSPD. Positions 486, 488, and 499 each coordinate (R)-carnitine. N6-acetyllysine; alternate is present on residues Lys510 and Lys544. N6-succinyllysine; alternate occurs at positions 510 and 544.

Belongs to the carnitine/choline acetyltransferase family.

Its subcellular location is the mitochondrion inner membrane. It catalyses the reaction (R)-carnitine + hexadecanoyl-CoA = O-hexadecanoyl-(R)-carnitine + CoA. The enzyme catalyses octanoyl-CoA + (R)-carnitine = O-octanoyl-(R)-carnitine + CoA. It carries out the reaction decanoyl-CoA + (R)-carnitine = O-decanoyl-(R)-carnitine + CoA. The catalysed reaction is dodecanoyl-CoA + (R)-carnitine = O-dodecanoyl-R-carnitine + CoA. It catalyses the reaction tetradecanoyl-CoA + (R)-carnitine = O-tetradecanoyl-(R)-carnitine + CoA. The enzyme catalyses (R)-carnitine + octadecanoyl-CoA = O-octadecanoyl-(R)-carnitine + CoA. It carries out the reaction eicosanoyl-CoA + (R)-carnitine = O-eicosanoyl-(R)-carnitine + CoA. The catalysed reaction is (9Z)-tetradecenoyl-CoA + (R)-carnitine = O-(9Z)-tetradecenoyl-(R)-carnitine + CoA. It catalyses the reaction (5Z)-tetradecenoyl-CoA + (R)-carnitine = O-(5Z)-tetradecenoyl-(R)-carnitine + CoA. The enzyme catalyses (R)-carnitine + (9Z)-octadecenoyl-CoA = O-(9Z)-octadecenoyl-(R)-carnitine + CoA. It carries out the reaction 4,8-dimethylnonanoyl-CoA + (R)-carnitine = O-4,8-dimethylnonanoyl-(R)-carnitine + CoA. The protein operates within lipid metabolism; fatty acid beta-oxidation. Involved in the intramitochondrial synthesis of acylcarnitines from accumulated acyl-CoA metabolites. Reconverts acylcarnitines back into the respective acyl-CoA esters that can then undergo beta-oxidation, an essential step for the mitochondrial uptake of long-chain fatty acids and their subsequent beta-oxidation in the mitochondrion. Active with medium (C8-C12) and long-chain (C14-C18) acyl-CoA esters. In Macaca fascicularis (Crab-eating macaque), this protein is Carnitine O-palmitoyltransferase 2, mitochondrial (CPT2).